A 442-amino-acid polypeptide reads, in one-letter code: uncharacterized protein (442 aa).

Residues C43, C49, C52, and C130 each coordinate [4Fe-4S] cluster. Q273, Y302, E323, and D372 together coordinate S-adenosyl-L-methionine. The Nucleophile role is filled by C399.

This sequence belongs to the class I-like SAM-binding methyltransferase superfamily. RNA M5U methyltransferase family.

This is an uncharacterized protein from Protochlamydia amoebophila (strain UWE25).